The primary structure comprises 137 residues: uncharacterized protein (137 aa).

It belongs to the ycf72 family.

Its subcellular location is the plastid. The protein resides in the chloroplast. This is an uncharacterized protein from Saccharum hybrid (Sugarcane).